Here is a 199-residue protein sequence, read N- to C-terminus: Thymidine kinase (199 aa).

Residues 15–22 (GSMFSGKS) and 88–91 (DEVQ) contribute to the ATP site. Catalysis depends on glutamate 89, which acts as the Proton acceptor. Cysteine 145, cysteine 148, cysteine 183, and histidine 186 together coordinate Zn(2+).

Belongs to the thymidine kinase family. As to quaternary structure, homotetramer.

It localises to the cytoplasm. It carries out the reaction thymidine + ATP = dTMP + ADP + H(+). In Staphylococcus aureus (strain Mu50 / ATCC 700699), this protein is Thymidine kinase.